A 317-amino-acid chain; its full sequence is Protein phosphatase 1 regulatory subunit 3C (317 aa).

The PP1-binding motif signature appears at 84–87 (RVVF). Residues 141-263 (PSSDYLSFRD…YRIVHVQWKP (123 aa)) form an interaction with EPM2A region. The CBM21 domain occupies 149–257 (RDRFQKNFVC…NNEAQNYRIV (109 aa)).

In terms of assembly, interacts with PPP1CC catalytic subunit of PP1 and associates with glycogen. Forms complexes with glycogen phosphorylase, glycogen synthase and phosphorylase kinase which is necessary for its regulation of PP1 activity. Also interacts with EPM2A/laforin. Post-translationally, ubiquitinated by NHLRC1/malin in a EPM2A/laforin-dependent manner.

In terms of biological role, acts as a glycogen-targeting subunit for PP1 and regulates its activity. Activates glycogen synthase, reduces glycogen phosphorylase activity and limits glycogen breakdown. Dramatically increases basal and insulin-stimulated glycogen synthesis upon overexpression in a variety of cell types. In Rattus norvegicus (Rat), this protein is Protein phosphatase 1 regulatory subunit 3C.